We begin with the raw amino-acid sequence, 185 residues long: Endoribonuclease YbeY (185 aa).

The Zn(2+) site is built by H135, H139, and H145.

The protein belongs to the endoribonuclease YbeY family. Requires Zn(2+) as cofactor.

The protein resides in the cytoplasm. Its function is as follows. Single strand-specific metallo-endoribonuclease involved in late-stage 70S ribosome quality control and in maturation of the 3' terminus of the 16S rRNA. In Parasynechococcus marenigrum (strain WH8102), this protein is Endoribonuclease YbeY.